The following is a 272-amino-acid chain: Alkaline ceramidase (272 aa).

2 helical membrane passes run 34–54 (FANT…IMLL) and 61–81 (VNGG…ASTY). H83 contacts Zn(2+). Transmembrane regions (helical) follow at residues 96–116 (LSLV…MKWF), 124–144 (LTVV…LCFL), 148–168 (LNAI…RYEG), and 183–203 (ILAL…LCDF). Residues H213 and H217 each coordinate Zn(2+). A helical transmembrane segment spans residues 214–234 (ALFHLLAGLAGYTIFIMFSMI). N256 is a glycosylation site (N-linked (GlcNAc...) asparagine).

It belongs to the alkaline ceramidase family. The cofactor is Zn(2+).

It is found in the membrane. The enzyme catalyses an N-acylsphing-4-enine + H2O = sphing-4-enine + a fatty acid. Hydrolyzes the sphingolipid ceramide into sphingosine and free fatty acid. In Caenorhabditis briggsae, this protein is Alkaline ceramidase.